Consider the following 450-residue polypeptide: Phosphoglucosamine mutase (450 aa).

Catalysis depends on Ser-97, which acts as the Phosphoserine intermediate. Mg(2+) contacts are provided by Ser-97, Asp-236, Asp-238, and Asp-240. Ser-97 is subject to Phosphoserine.

Belongs to the phosphohexose mutase family. The cofactor is Mg(2+). Post-translationally, activated by phosphorylation.

The catalysed reaction is alpha-D-glucosamine 1-phosphate = D-glucosamine 6-phosphate. Catalyzes the conversion of glucosamine-6-phosphate to glucosamine-1-phosphate. In Prochlorococcus marinus (strain MIT 9215), this protein is Phosphoglucosamine mutase.